The sequence spans 338 residues: Methionine import ATP-binding protein MetN 1 (338 aa).

The 240-residue stretch at 2 to 241 (IEVRSVTKRF…PHSELGVGLL (240 aa)) folds into the ABC transporter domain. 38 to 45 (GQSGAGKT) serves as a coordination point for ATP.

Belongs to the ABC transporter superfamily. Methionine importer (TC 3.A.1.24) family. In terms of assembly, the complex is composed of two ATP-binding proteins (MetN), two transmembrane proteins (MetI) and a solute-binding protein (MetQ).

The protein resides in the cell membrane. It catalyses the reaction L-methionine(out) + ATP + H2O = L-methionine(in) + ADP + phosphate + H(+). The catalysed reaction is D-methionine(out) + ATP + H2O = D-methionine(in) + ADP + phosphate + H(+). Its function is as follows. Part of the ABC transporter complex MetNIQ involved in methionine import. Responsible for energy coupling to the transport system. This is Methionine import ATP-binding protein MetN 1 from Rhodococcus jostii (strain RHA1).